Here is a 105-residue protein sequence, read N- to C-terminus: Thiosulfate sulfurtransferase GlpE (105 aa).

The 89-residue stretch at 15-103 (MQQGAILVDI…WCRAELPIDT (89 aa)) folds into the Rhodanese domain. Catalysis depends on Cys63, which acts as the Cysteine persulfide intermediate.

The protein belongs to the GlpE family.

Its subcellular location is the cytoplasm. It catalyses the reaction thiosulfate + hydrogen cyanide = thiocyanate + sulfite + 2 H(+). It carries out the reaction thiosulfate + [thioredoxin]-dithiol = [thioredoxin]-disulfide + hydrogen sulfide + sulfite + 2 H(+). Functionally, transferase that catalyzes the transfer of sulfur from thiosulfate to thiophilic acceptors such as cyanide or dithiols. May function in a CysM-independent thiosulfate assimilation pathway by catalyzing the conversion of thiosulfate to sulfite, which can then be used for L-cysteine biosynthesis. This chain is Thiosulfate sulfurtransferase GlpE, found in Haemophilus influenzae (strain PittEE).